Reading from the N-terminus, the 292-residue chain is AKT-interacting protein (292 aa).

Polar residues predominate over residues 1 to 11; sequence MNPFWSMSTSS. Positions 1–63 are disordered; that stretch reads MNPFWSMSTS…TSPAPAAQST (63 aa). Residues 14 to 23 are compositionally biased toward basic and acidic residues; it reads KRSEGEEKTL. At Ser30 the chain carries Phosphoserine. Residues 74 to 222 enclose the UBC core domain; that stretch reads YLEYSLLAEF…VVDSVKVCTA (149 aa).

Belongs to the ubiquitin-conjugating enzyme family. FTS subfamily. As to quaternary structure, component of the FTS/Hook/FHIP complex (FHF complex), composed of AKTIP/FTS, FHIP1B, and one or more members of the Hook family of proteins HOOK1, HOOK2, and HOOK3. Interacts directly with HOOK1, HOOK2 and HOOK3. The FHF complex associates with the homotypic vesicular sorting complex (the HOPS complex). Also interacts with AKT1. May interact with FHIP1A.

The protein localises to the cytoplasm. It localises to the cell membrane. Its function is as follows. Component of the FTS/Hook/FHIP complex (FHF complex). The FHF complex may function to promote vesicle trafficking and/or fusion via the homotypic vesicular protein sorting complex (the HOPS complex). Regulates apoptosis by enhancing phosphorylation and activation of AKT1. Increases release of TNFSF6 via the AKT1/GSK3B/NFATC1 signaling cascade. FHF complex promotes the distribution of AP-4 complex to the perinuclear area of the cell. This chain is AKT-interacting protein, found in Homo sapiens (Human).